We begin with the raw amino-acid sequence, 573 residues long: Probable pectinesterase/pectinesterase inhibitor 41 (573 aa).

An N-terminal signal peptide occupies residues 1-22 (MLSLKLFLVTLFLSLQTLFIAS). The interval 25 to 184 (LLPSNSSSTI…TKLFSVSLAL (160 aa)) is pectinesterase inhibitor 41. Residues Asn29, Asn119, Asn173, Asn264, Asn268, Asn281, and Asn320 are each glycosylated (N-linked (GlcNAc...) asparagine). Positions 259 to 557 (VTVNQNGTGN…FTVENFLLGD (299 aa)) are pectinesterase 41. Residue Thr336 participates in substrate binding. Residue Asn353 is glycosylated (N-linked (GlcNAc...) asparagine). Position 366 (Gln366) interacts with substrate. Residue Asp389 is the Proton donor; for pectinesterase activity of the active site. Cysteines 403 and 423 form a disulfide. The Nucleophile; for pectinesterase activity role is filled by Asp410. Asn456 and Asn469 each carry an N-linked (GlcNAc...) asparagine glycan. 2 residues coordinate substrate: Arg478 and Trp480. Residues Asn520, Asn541, and Asn547 are each glycosylated (N-linked (GlcNAc...) asparagine).

The protein in the N-terminal section; belongs to the PMEI family. In the C-terminal section; belongs to the pectinesterase family. Expressed in flowers, siliques, floral stems and rosettes leaves.

It is found in the secreted. Its subcellular location is the cell wall. It carries out the reaction [(1-&gt;4)-alpha-D-galacturonosyl methyl ester](n) + n H2O = [(1-&gt;4)-alpha-D-galacturonosyl](n) + n methanol + n H(+). Its pathway is glycan metabolism; pectin degradation; 2-dehydro-3-deoxy-D-gluconate from pectin: step 1/5. Functionally, acts in the modification of cell walls via demethylesterification of cell wall pectin. This is Probable pectinesterase/pectinesterase inhibitor 41 (PME41) from Arabidopsis thaliana (Mouse-ear cress).